Here is a 467-residue protein sequence, read N- to C-terminus: MLKSAVYSILAASLVNAGTIPLGKLSDIDKIGTQTEIFPFLGGSGPYYSFPGDYGISRDLPESCEMKQVQMVGRHGERYPTVSKAKSIMTTWYKLSNYTGQFSGALSFLNDDYEFFIRDTKNLEMETTLANSVNVLNPYTGEMNAKRHARDFLAQYGYMVENQTSFAVFTSNSNRCHDTAQYFIDGLGDKFNISLQTISEAESAGANTLSAHHSCPAWDDDVNDDILKKYDTKYLSGIAKRLNKENKGLNLTSSDANTFFAWCAYEINARGYSDICNIFTKDELVRFSYGQDLETYYQTGPGYDVVRSVGANLFNASVKLLKESEVQDQKVWLSFTHDTDILNYLTTIGIIDDQNNLTAEHVPFMENTFHRSWYVPQGARVYTEKFQCSNDTYVRYVINDAVVPIETCSTGPGFSCEINDFYGYAEKRVAGTDFLKVCNVSSVSNSTELTFFWDWNTKHYNDTLLKQ.

A signal peptide spans 1 to 17 (MLKSAVYSILAASLVNA). His-75 (nucleophile) is an active-site residue. 5 N-linked (GlcNAc...) asparagine glycosylation sites follow: Asn-97, Asn-162, Asn-192, Asn-250, and Asn-315. The active-site Proton donor is the Asp-338. 5 N-linked (GlcNAc...) asparagine glycosylation sites follow: Asn-356, Asn-390, Asn-439, Asn-445, and Asn-461.

This sequence belongs to the histidine acid phosphatase family. Post-translationally, glycosylated during secretion across the membrane.

It catalyses the reaction a phosphate monoester + H2O = an alcohol + phosphate. The polypeptide is Acid phosphatase PHO12 (PHO12) (Saccharomyces cerevisiae (strain ATCC 204508 / S288c) (Baker's yeast)).